A 160-amino-acid chain; its full sequence is Lymphocyte antigen 86 (160 aa).

Residues 1–20 form the signal peptide; it reads MKTLNVLALVLVLLCINAST. Cystine bridges form between cysteine 28-cysteine 53, cysteine 40-cysteine 149, and cysteine 97-cysteine 107.

As to quaternary structure, M-shaped tetramer of two CD180-LY86 heterodimers. Detected in the macrophage-like 10.4 cells.

It localises to the secreted. Its subcellular location is the extracellular space. Its function is as follows. May cooperate with CD180 and TLR4 to mediate the innate immune response to bacterial lipopolysaccharide (LPS) and cytokine production. Important for efficient CD180 cell surface expression. This is Lymphocyte antigen 86 (LY86) from Gallus gallus (Chicken).